The primary structure comprises 105 residues: DNA-directed RNA polymerase subunit omega (105 aa).

It belongs to the RNA polymerase subunit omega family. The RNAP catalytic core consists of 2 alpha, 1 beta, 1 beta' and 1 omega subunit. When a sigma factor is associated with the core the holoenzyme is formed, which can initiate transcription.

It carries out the reaction RNA(n) + a ribonucleoside 5'-triphosphate = RNA(n+1) + diphosphate. In terms of biological role, promotes RNA polymerase assembly. Latches the N- and C-terminal regions of the beta' subunit thereby facilitating its interaction with the beta and alpha subunits. The sequence is that of DNA-directed RNA polymerase subunit omega from Streptococcus equi subsp. equi (strain 4047).